The sequence spans 183 residues: Capsid protein (183 aa).

Residues 143–183 form a disordered region; that stretch reads LPETAVVRRRGRSPRRRTPSPRRRRSQSPRRRRSQSPASQC. The segment covering 149 to 176 has biased composition (basic residues); sequence VRRRGRSPRRRTPSPRRRRSQSPRRRRS. A phosphoserine; by host mark is found at Ser-155, Ser-162, and Ser-170. The stretch at 155–161 is one 1; half-length repeat; it reads SPRRRTP. Residues 155–177 form a 3 X 8 AA repeats of S-P-R-R-R-[PR]-S-Q region; that stretch reads SPRRRTPSPRRRRSQSPRRRRSQ. The Bipartite nuclear localization signal signature appears at 158–175; the sequence is RRTPSPRRRRSQSPRRRR. 2 consecutive repeat copies span residues 162–169 and 170–177. An RNA binding region spans residues 177 to 183; it reads QSPASQC.

Belongs to the orthohepadnavirus core antigen family. In terms of assembly, homodimerizes, then multimerizes. Interacts with cytosol exposed regions of viral L glycoprotein present in the reticulum-to-Golgi compartment. Interacts with human FLNB. Phosphorylated form interacts with host importin alpha; this interaction depends on the exposure of the NLS, which itself depends upon genome maturation and/or phosphorylation of the capsid protein. Interacts with host NUP153. In terms of processing, phosphorylated by host SRPK1, SRPK2, and maybe protein kinase C or GAPDH. Phosphorylation is critical for pregenomic RNA packaging. Protein kinase C phosphorylation is stimulated by HBx protein and may play a role in transport of the viral genome to the nucleus at the late step during the viral replication cycle.

The protein resides in the virion. It localises to the host cytoplasm. Its function is as follows. Self assembles to form an icosahedral capsid. Most capsids appear to be large particles with an icosahedral symmetry of T=4 and consist of 240 copies of capsid protein, though a fraction forms smaller T=3 particles consisting of 180 capsid proteins. Entering capsids are transported along microtubules to the nucleus. Phosphorylation of the capsid is thought to induce exposure of nuclear localization signal in the C-terminal portion of the capsid protein that allows binding to the nuclear pore complex via the importin (karyopherin-) alpha and beta. Capsids are imported in intact form through the nuclear pore into the nuclear basket, where it probably binds NUP153. Only capsids that contain the mature viral genome can release the viral DNA and capsid protein into the nucleoplasm. Immature capsids get stuck in the basket. Capsids encapsulate the pre-genomic RNA and the P protein. Pre-genomic RNA is reverse-transcribed into DNA while the capsid is still in the cytoplasm. The capsid can then either be directed to the nucleus, providing more genomes for transcription, or bud through the endoplasmic reticulum to provide new virions. This is Capsid protein from Gorilla gorilla (western gorilla).